Here is a 252-residue protein sequence, read N- to C-terminus: Triosephosphate isomerase (252 aa).

Substrate is bound at residue 9–11 (NWK). His-95 (electrophile) is an active-site residue. Glu-167 (proton acceptor) is an active-site residue. Substrate is bound by residues Gly-173, Ser-213, and 234–235 (GG). Residue Ser-213 is modified to Phosphoserine.

This sequence belongs to the triosephosphate isomerase family. Homodimer.

The protein resides in the cytoplasm. It catalyses the reaction D-glyceraldehyde 3-phosphate = dihydroxyacetone phosphate. The protein operates within carbohydrate biosynthesis; gluconeogenesis. Its pathway is carbohydrate degradation; glycolysis; D-glyceraldehyde 3-phosphate from glycerone phosphate: step 1/1. Involved in the gluconeogenesis. Catalyzes stereospecifically the conversion of dihydroxyacetone phosphate (DHAP) to D-glyceraldehyde-3-phosphate (G3P). In Oceanobacillus iheyensis (strain DSM 14371 / CIP 107618 / JCM 11309 / KCTC 3954 / HTE831), this protein is Triosephosphate isomerase.